The following is a 264-amino-acid chain: Proteasome subunit beta type-4 (264 aa).

Position 1 is an N-acetylmethionine (Met1). The propeptide occupies 1-45 (MEALLESRSGLWAGGPAPGQFYRIPPTPGSSVDPVSALYGSPITR). At Tyr102 the chain carries Phosphotyrosine.

It belongs to the peptidase T1B family. As to quaternary structure, the 26S proteasome consists of a 20S proteasome core and two 19S regulatory subunits. The 20S proteasome core is a barrel-shaped complex made of 28 subunits that are arranged in four stacked rings. The two outer rings are each formed by seven alpha subunits, and the two inner rings are formed by seven beta subunits. The proteolytic activity is exerted by three beta-subunits PSMB5, PSMB6 and PSMB7. Forms a ternary complex with SMAD1 and OAZ1 before PSMB4 is incorporated into the 20S proteasome. Interacts with PRPF19.

It localises to the cytoplasm. The protein localises to the nucleus. Non-catalytic component of the 20S core proteasome complex involved in the proteolytic degradation of most intracellular proteins. This complex plays numerous essential roles within the cell by associating with different regulatory particles. Associated with two 19S regulatory particles, forms the 26S proteasome and thus participates in the ATP-dependent degradation of ubiquitinated proteins. The 26S proteasome plays a key role in the maintenance of protein homeostasis by removing misfolded or damaged proteins that could impair cellular functions, and by removing proteins whose functions are no longer required. Associated with the PA200 or PA28, the 20S proteasome mediates ubiquitin-independent protein degradation. This type of proteolysis is required in several pathways including spermatogenesis (20S-PA200 complex) or generation of a subset of MHC class I-presented antigenic peptides (20S-PA28 complex). SMAD1/OAZ1/PSMB4 complex mediates the degradation of the CREBBP/EP300 repressor SNIP1. The sequence is that of Proteasome subunit beta type-4 (PSMB4) from Bos taurus (Bovine).